The sequence spans 116 residues: Large ribosomal subunit protein bL20 (116 aa).

Belongs to the bacterial ribosomal protein bL20 family.

Functionally, binds directly to 23S ribosomal RNA and is necessary for the in vitro assembly process of the 50S ribosomal subunit. It is not involved in the protein synthesizing functions of that subunit. This chain is Large ribosomal subunit protein bL20, found in Synechococcus elongatus (strain ATCC 33912 / PCC 7942 / FACHB-805) (Anacystis nidulans R2).